The chain runs to 414 residues: Glutamyl-tRNA reductase (414 aa).

Residues T49–R52, S108, E113–Q115, and Q119 each bind substrate. The Nucleophile role is filled by C50. G188–G193 contacts NADP(+).

Belongs to the glutamyl-tRNA reductase family. Homodimer.

It carries out the reaction (S)-4-amino-5-oxopentanoate + tRNA(Glu) + NADP(+) = L-glutamyl-tRNA(Glu) + NADPH + H(+). It participates in porphyrin-containing compound metabolism; protoporphyrin-IX biosynthesis; 5-aminolevulinate from L-glutamyl-tRNA(Glu): step 1/2. Functionally, catalyzes the NADPH-dependent reduction of glutamyl-tRNA(Glu) to glutamate 1-semialdehyde (GSA). The protein is Glutamyl-tRNA reductase of Francisella tularensis subsp. holarctica (strain FTNF002-00 / FTA).